A 95-amino-acid chain; its full sequence is Orphan antitoxin ParD2 (95 aa).

Functionally, antitoxin component of a non-functional type II toxin-antitoxin (TA system). Does not neutralize the effect of any of the RelE or ParE toxins. The chain is Orphan antitoxin ParD2 (parD2) from Caulobacter vibrioides (strain ATCC 19089 / CIP 103742 / CB 15) (Caulobacter crescentus).